We begin with the raw amino-acid sequence, 307 residues long: 4-hydroxy-tetrahydrodipicolinate synthase (307 aa).

Serine 57 serves as a coordination point for pyruvate. The Proton donor/acceptor role is filled by tyrosine 145. The Schiff-base intermediate with substrate role is filled by lysine 173. Pyruvate is bound at residue isoleucine 219.

This sequence belongs to the DapA family. Homotetramer; dimer of dimers.

The protein resides in the cytoplasm. It catalyses the reaction L-aspartate 4-semialdehyde + pyruvate = (2S,4S)-4-hydroxy-2,3,4,5-tetrahydrodipicolinate + H2O + H(+). It participates in amino-acid biosynthesis; L-lysine biosynthesis via DAP pathway; (S)-tetrahydrodipicolinate from L-aspartate: step 3/4. In terms of biological role, catalyzes the condensation of (S)-aspartate-beta-semialdehyde [(S)-ASA] and pyruvate to 4-hydroxy-tetrahydrodipicolinate (HTPA). The protein is 4-hydroxy-tetrahydrodipicolinate synthase of Polynucleobacter asymbioticus (strain DSM 18221 / CIP 109841 / QLW-P1DMWA-1) (Polynucleobacter necessarius subsp. asymbioticus).